Consider the following 345-residue polypeptide: Ferrochelatase (345 aa).

Residues H215 and E296 each contribute to the Fe cation site.

The protein belongs to the ferrochelatase family.

The protein resides in the cytoplasm. It catalyses the reaction heme b + 2 H(+) = protoporphyrin IX + Fe(2+). Its pathway is porphyrin-containing compound metabolism; protoheme biosynthesis; protoheme from protoporphyrin-IX: step 1/1. Catalyzes the ferrous insertion into protoporphyrin IX. The polypeptide is Ferrochelatase (Nitrobacter hamburgensis (strain DSM 10229 / NCIMB 13809 / X14)).